A 565-amino-acid polypeptide reads, in one-letter code: uncharacterized protein (565 aa).

An N-terminal signal peptide occupies residues 1 to 19 (MRWLATFVALLIAISSVSA). Over residues 494–504 (TGAENVTNNSV) the composition is skewed to polar residues. Residues 494–525 (TGAENVTNNSVTATTPPAKASQQTPAPATPPV) form a disordered region. The span at 505 to 519 (TATTPPAKASQQTPA) shows a compositional bias: low complexity.

This is an uncharacterized protein from Archaeoglobus fulgidus (strain ATCC 49558 / DSM 4304 / JCM 9628 / NBRC 100126 / VC-16).